The primary structure comprises 838 residues: MVQFDVEKTLEELTLGEKVALTAGTDFWHTAAVPRLNIPSLRMSDGPNGVRGTRFFNGTRAACFPCSTALGATWDTELLYEVGRLMAEESIAKGSHIILGPTINTQRSPLGGRGFESFAEDGVLSGLLAGNYCKGLQDKGVAATLKHFVCNDQEHERLAVDSIVTMRAMREIYLMPFHLAMRLCKTACVMTAYNKINGTHVSENKQIITDILRKEWGWDGLVMSDWFGTYSTSDAINAGLDLEMPGPTRWRGTALAHAVSSNKAFEYVLDERVRNVLNLHNFVEPLGIPENAPEEALNRPEDQALLRRAAAESVVLMKNEDNILPLKKEKSILVIGPNAKTAAYCGGGSASLDAYYTVAPFDGVKAKSEGEVSFSQGVYSYNELPVLGPLLKTEEGEKGFKFRVYNEPSSNPNRELLDELRLENSLGFLMDYKHPKVTSFLFYADMEGYFTPEEDGIYDFGVTVQGTGKLYIDGELVVDNSKNQRQGTAFFGNATVEEKGSKELKAGQTYKVVVEFGSAPTSDLDMRGVVVFGPGGFRFGAARRVGQEELISKAAELASQADQVVIFAGLTSEWETEGHDRDHMDLPAGSDEMISRVLDANPNAVVVIQSGTPVTMPWAHKTKALLQAWFGGNECGNGIADVLYGDVNPSAKLPLSFPVRLQDNPSYLNFRSERGRVLYGEDVYVGYRYYEKVDLAPLFPFGHGLSYTTFSRSDLSLATVPEKRQLEDGEPITATVTVTNTGDVAGAEVVQLWIVPPPTGVNRPVRELKGFAKVFLNPGESKTVEIVVEKKLATSWWDEQREKWASEKGTYKVLVTGTGDEVLKSSFEVEKTRFWLGL.

Residues Asn-57 and Asn-197 are each glycosylated (N-linked (GlcNAc...) asparagine). Asp-225 is a catalytic residue. The region spanning 395–555 (EGEKGFKFRV…GQEELISKAA (161 aa)) is the PA14 domain. Residue Asn-493 is glycosylated (N-linked (GlcNAc...) asparagine).

Belongs to the glycosyl hydrolase 3 family.

It is found in the secreted. It carries out the reaction Hydrolysis of terminal, non-reducing beta-D-glucosyl residues with release of beta-D-glucose.. It participates in glycan metabolism; cellulose degradation. In terms of biological role, beta-glucosidases are one of a number of cellulolytic enzymes involved in the degradation of cellulosic biomass. Catalyzes the last step releasing glucose from the inhibitory cellobiose. The chain is Probable beta-glucosidase I (bglI) from Aspergillus clavatus (strain ATCC 1007 / CBS 513.65 / DSM 816 / NCTC 3887 / NRRL 1 / QM 1276 / 107).